Consider the following 470-residue polypeptide: Siroheme synthase (470 aa).

Residues Met-1–Leu-203 form a precorrin-2 dehydrogenase /sirohydrochlorin ferrochelatase region. NAD(+)-binding positions include Glu-22 to Val-23 and Pro-43 to Glu-44. Ser-128 is subject to Phosphoserine. The interval Gly-214 to Ala-470 is uroporphyrinogen-III C-methyltransferase. Pro-223 is a binding site for S-adenosyl-L-methionine. The active-site Proton acceptor is the Asp-246. The Proton donor role is filled by Lys-268. S-adenosyl-L-methionine is bound by residues Gly-299–Asp-301, Ile-304, Thr-329–Ala-330, Met-381, and Gly-410.

In the N-terminal section; belongs to the precorrin-2 dehydrogenase / sirohydrochlorin ferrochelatase family. It in the C-terminal section; belongs to the precorrin methyltransferase family.

The catalysed reaction is uroporphyrinogen III + 2 S-adenosyl-L-methionine = precorrin-2 + 2 S-adenosyl-L-homocysteine + H(+). It catalyses the reaction precorrin-2 + NAD(+) = sirohydrochlorin + NADH + 2 H(+). The enzyme catalyses siroheme + 2 H(+) = sirohydrochlorin + Fe(2+). It participates in cofactor biosynthesis; adenosylcobalamin biosynthesis; precorrin-2 from uroporphyrinogen III: step 1/1. It functions in the pathway cofactor biosynthesis; adenosylcobalamin biosynthesis; sirohydrochlorin from precorrin-2: step 1/1. Its pathway is porphyrin-containing compound metabolism; siroheme biosynthesis; precorrin-2 from uroporphyrinogen III: step 1/1. The protein operates within porphyrin-containing compound metabolism; siroheme biosynthesis; siroheme from sirohydrochlorin: step 1/1. It participates in porphyrin-containing compound metabolism; siroheme biosynthesis; sirohydrochlorin from precorrin-2: step 1/1. In terms of biological role, multifunctional enzyme that catalyzes the SAM-dependent methylations of uroporphyrinogen III at position C-2 and C-7 to form precorrin-2 via precorrin-1. Then it catalyzes the NAD-dependent ring dehydrogenation of precorrin-2 to yield sirohydrochlorin. Finally, it catalyzes the ferrochelation of sirohydrochlorin to yield siroheme. The chain is Siroheme synthase from Photorhabdus laumondii subsp. laumondii (strain DSM 15139 / CIP 105565 / TT01) (Photorhabdus luminescens subsp. laumondii).